A 344-amino-acid chain; its full sequence is Methionine import ATP-binding protein MetN (344 aa).

The 240-residue stretch at 2–241 (LELKQVGKVY…PQAEVTKAFV (240 aa)) folds into the ABC transporter domain. Residue 38–45 (GYSGAGKS) coordinates ATP.

It belongs to the ABC transporter superfamily. Methionine importer (TC 3.A.1.24) family. As to quaternary structure, the complex is composed of two ATP-binding proteins (MetN), two transmembrane proteins (MetI) and a solute-binding protein (MetQ).

The protein resides in the cell membrane. It catalyses the reaction L-methionine(out) + ATP + H2O = L-methionine(in) + ADP + phosphate + H(+). The catalysed reaction is D-methionine(out) + ATP + H2O = D-methionine(in) + ADP + phosphate + H(+). Part of the ABC transporter complex MetNIQ involved in methionine import. Responsible for energy coupling to the transport system. The polypeptide is Methionine import ATP-binding protein MetN (Latilactobacillus sakei subsp. sakei (strain 23K) (Lactobacillus sakei subsp. sakei)).